The chain runs to 454 residues: UDP-N-acetylmuramoylalanine--D-glutamate ligase (454 aa).

114–120 (GTNGKTT) serves as a coordination point for ATP.

Belongs to the MurCDEF family.

Its subcellular location is the cytoplasm. It carries out the reaction UDP-N-acetyl-alpha-D-muramoyl-L-alanine + D-glutamate + ATP = UDP-N-acetyl-alpha-D-muramoyl-L-alanyl-D-glutamate + ADP + phosphate + H(+). Its pathway is cell wall biogenesis; peptidoglycan biosynthesis. Its function is as follows. Cell wall formation. Catalyzes the addition of glutamate to the nucleotide precursor UDP-N-acetylmuramoyl-L-alanine (UMA). In Desulfitobacterium hafniense (strain DSM 10664 / DCB-2), this protein is UDP-N-acetylmuramoylalanine--D-glutamate ligase.